We begin with the raw amino-acid sequence, 322 residues long: MSTNFEKHFEVDVDNCSLEQLRDILVNNSGKAPLANRFRALFNLKGHAEEFASKPEDALKATQYLAEAFGDESELLKHEVAYVLGQTKNMAGAPLLRDVLADDKQQCMVRHEAAEALGALNDVDSLDILEKYFKEDPLLEIRQTCELAIDRIKWETSEEGRREALQESLYSSIDPAPPFSLEKDYKIQELKDILNDQNRPLFERYRAMFRLRDIGNDEACLALASGFDDPSALFKHEIAYVFGQICNPVVVPHLKEVLARPEEAPMVRHEAAEALGSIATDDVLPVLKEHLKDSDSVVRESAIVALDMYEYENSNDLEYAPV.

2 HEAT-like PBS-type repeats span residues leucine 76–aspartate 102 and valine 109–glutamate 135. 8 residues coordinate Fe cation: histidine 78, glutamate 79, histidine 111, glutamate 112, histidine 236, glutamate 237, histidine 269, and glutamate 270. Residues valine 267 to aspartate 293 form an HEAT-like PBS-type 3 repeat.

Belongs to the deoxyhypusine hydroxylase family. It depends on Fe(2+) as a cofactor.

The protein resides in the cytoplasm. It is found in the nucleus. It carries out the reaction [eIF5A protein]-deoxyhypusine + AH2 + O2 = [eIF5A protein]-hypusine + A + H2O. Its pathway is protein modification; eIF5A hypusination. Its function is as follows. Catalyzes the hydroxylation of the N(6)-(4-aminobutyl)-L-lysine intermediate to form hypusine, an essential post-translational modification only found in mature eIF-5A factor. This is Deoxyhypusine hydroxylase from Kluyveromyces lactis (strain ATCC 8585 / CBS 2359 / DSM 70799 / NBRC 1267 / NRRL Y-1140 / WM37) (Yeast).